We begin with the raw amino-acid sequence, 434 residues long: Alpha-enolase (434 aa).

Position 2 is an N-acetylserine (Ser2). Lys5 carries the post-translational modification N6-acetyllysine. Ser27 is subject to Phosphoserine. Ser40 lines the Mg(2+) pocket. Tyr44 is subject to Phosphotyrosine. Lys60 carries the post-translational modification N6-acetyllysine; alternate. Lys60 carries the N6-succinyllysine; alternate modification. An N6-acetyllysine mark is found at Lys64 and Lys71. The residue at position 89 (Lys89) is an N6-acetyllysine; alternate. The residue at position 89 (Lys89) is an N6-succinyllysine; alternate. N6-acetyllysine is present on residues Lys92 and Lys126. Positions 158 and 167 each coordinate substrate. Lys193 and Lys199 each carry N6-acetyllysine. Lys202 bears the N6-acetyllysine; alternate mark. Lys202 participates in a covalent cross-link: Glycyl lysine isopeptide (Lys-Gly) (interchain with G-Cter in SUMO2); alternate. The Proton donor role is filled by Glu210. 2 positions are modified to N6-acetyllysine; alternate: Lys228 and Lys233. Lys228 is modified (N6-succinyllysine; alternate). Residue Lys228 is modified to N6-(2-hydroxyisobutyryl)lysine; alternate. Lys233 is subject to N6-malonyllysine; alternate. Asp245 contacts Mg(2+). Phosphoserine is present on Ser254. N6-acetyllysine is present on Lys256. Ser263 and Ser272 each carry phosphoserine. The residue at position 281 (Lys281) is an N6-acetyllysine; alternate. Lys281 bears the N6-(2-hydroxyisobutyryl)lysine; alternate mark. Lys285 is subject to N6-acetyllysine. Phosphotyrosine is present on Tyr287. Position 291 is a phosphoserine (Ser291). Mg(2+) contacts are provided by Glu293 and Asp318. Positions 293 and 318 each coordinate substrate. N6-acetyllysine occurs at positions 335 and 343. Lys343 serves as the catalytic Proton acceptor. Residues 370–373 and Lys394 contribute to the substrate site; that span reads SHRS. Residues 405-434 form a required for interaction with PLG region; it reads AKYNQLLRIEEELGSKAKFAGRNFRNPLAK. Lys406 bears the N6-acetyllysine mark. Lys420 carries the N6-acetyllysine; alternate modification. The residue at position 420 (Lys420) is an N6-succinyllysine; alternate. Residue Lys420 is modified to N6-malonyllysine; alternate.

The protein belongs to the enolase family. Mammalian enolase is composed of 3 isozyme subunits, alpha, beta and gamma, which can form homodimers or heterodimers which are cell-type and development-specific. ENO1 interacts with PLG in the neuronal plasma membrane and promotes its activation. The C-terminal lysine is required for this binding. Interacts with ENO4 and PGAM2. Interacts with CMTM6. Mg(2+) is required as a cofactor. In terms of processing, ISGylated. Lysine 2-hydroxyisobutyrylation (Khib) by p300/EP300 activates the phosphopyruvate hydratase activity.

It localises to the cytoplasm. The protein localises to the cell membrane. It carries out the reaction (2R)-2-phosphoglycerate = phosphoenolpyruvate + H2O. The protein operates within carbohydrate degradation; glycolysis; pyruvate from D-glyceraldehyde 3-phosphate: step 4/5. Glycolytic enzyme the catalyzes the conversion of 2-phosphoglycerate to phosphoenolpyruvate. In addition to glycolysis, involved in various processes such as growth control, hypoxia tolerance and allergic responses. May also function in the intravascular and pericellular fibrinolytic system due to its ability to serve as a receptor and activator of plasminogen on the cell surface of several cell-types such as leukocytes and neurons. Stimulates immunoglobulin production. This is Alpha-enolase (ENO1) from Macaca fascicularis (Crab-eating macaque).